Reading from the N-terminus, the 96-residue chain is Large ribosomal subunit protein uL23 (96 aa).

Belongs to the universal ribosomal protein uL23 family. Part of the 50S ribosomal subunit. Contacts protein L29, and trigger factor when it is bound to the ribosome.

In terms of biological role, one of the early assembly proteins it binds 23S rRNA. One of the proteins that surrounds the polypeptide exit tunnel on the outside of the ribosome. Forms the main docking site for trigger factor binding to the ribosome. The chain is Large ribosomal subunit protein uL23 from Clostridioides difficile (strain 630) (Peptoclostridium difficile).